The primary structure comprises 384 residues: Succinyl-diaminopimelate desuccinylase (384 aa).

Histidine 71 provides a ligand contact to Zn(2+). The active site involves aspartate 73. Aspartate 104 lines the Zn(2+) pocket. Glutamate 138 acts as the Proton acceptor in catalysis. The Zn(2+) site is built by glutamate 139, glutamate 167, and histidine 357.

This sequence belongs to the peptidase M20A family. DapE subfamily. As to quaternary structure, homodimer. The cofactor is Zn(2+). Requires Co(2+) as cofactor.

The enzyme catalyses N-succinyl-(2S,6S)-2,6-diaminopimelate + H2O = (2S,6S)-2,6-diaminopimelate + succinate. It participates in amino-acid biosynthesis; L-lysine biosynthesis via DAP pathway; LL-2,6-diaminopimelate from (S)-tetrahydrodipicolinate (succinylase route): step 3/3. In terms of biological role, catalyzes the hydrolysis of N-succinyl-L,L-diaminopimelic acid (SDAP), forming succinate and LL-2,6-diaminopimelate (DAP), an intermediate involved in the bacterial biosynthesis of lysine and meso-diaminopimelic acid, an essential component of bacterial cell walls. This chain is Succinyl-diaminopimelate desuccinylase, found in Blochmanniella floridana.